A 427-amino-acid chain; its full sequence is 3-phosphoshikimate 1-carboxyvinyltransferase (427 aa).

3-phosphoshikimate is bound by residues Lys22, Ser23, and Arg27. Lys22 contributes to the phosphoenolpyruvate binding site. The phosphoenolpyruvate site is built by Gly96 and Arg124. 7 residues coordinate 3-phosphoshikimate: Ser169, Ser170, Gln171, Ser197, Asp313, Asn336, and Lys340. Residue Gln171 coordinates phosphoenolpyruvate. The active-site Proton acceptor is the Asp313. Arg344, Arg386, and Lys411 together coordinate phosphoenolpyruvate.

The protein belongs to the EPSP synthase family. Monomer.

It localises to the cytoplasm. It carries out the reaction 3-phosphoshikimate + phosphoenolpyruvate = 5-O-(1-carboxyvinyl)-3-phosphoshikimate + phosphate. It functions in the pathway metabolic intermediate biosynthesis; chorismate biosynthesis; chorismate from D-erythrose 4-phosphate and phosphoenolpyruvate: step 6/7. Its function is as follows. Catalyzes the transfer of the enolpyruvyl moiety of phosphoenolpyruvate (PEP) to the 5-hydroxyl of shikimate-3-phosphate (S3P) to produce enolpyruvyl shikimate-3-phosphate and inorganic phosphate. In Escherichia coli O6:H1 (strain CFT073 / ATCC 700928 / UPEC), this protein is 3-phosphoshikimate 1-carboxyvinyltransferase.